The chain runs to 103 residues: Cell division protein FtsB (103 aa).

The Cytoplasmic segment spans residues 1 to 3 (MGK). The helical transmembrane segment at 4–21 (LTLLLLAILVWLQYSLWF) threads the bilayer. The Periplasmic segment spans residues 22 to 103 (GKNGIHDYTR…RAQSAGQNNR (82 aa)). The stretch at 31–71 (RVNDDVAAQQATNAKLKARNDQLFAEIDDLNGGQEALEERA) forms a coiled coil.

This sequence belongs to the FtsB family. As to quaternary structure, part of a complex composed of FtsB, FtsL and FtsQ.

The protein localises to the cell inner membrane. Functionally, essential cell division protein. May link together the upstream cell division proteins, which are predominantly cytoplasmic, with the downstream cell division proteins, which are predominantly periplasmic. This chain is Cell division protein FtsB, found in Escherichia coli O157:H7.